The primary structure comprises 347 residues: N-acetyl-gamma-glutamyl-phosphate reductase (347 aa).

Cysteine 153 is a catalytic residue.

The protein belongs to the NAGSA dehydrogenase family. Type 1 subfamily.

The protein localises to the cytoplasm. It catalyses the reaction N-acetyl-L-glutamate 5-semialdehyde + phosphate + NADP(+) = N-acetyl-L-glutamyl 5-phosphate + NADPH + H(+). It participates in amino-acid biosynthesis; L-arginine biosynthesis; N(2)-acetyl-L-ornithine from L-glutamate: step 3/4. Its function is as follows. Catalyzes the NADPH-dependent reduction of N-acetyl-5-glutamyl phosphate to yield N-acetyl-L-glutamate 5-semialdehyde. The sequence is that of N-acetyl-gamma-glutamyl-phosphate reductase from Mycobacterium avium (strain 104).